A 229-amino-acid chain; its full sequence is Large ribosomal subunit protein uL1 (229 aa).

The protein belongs to the universal ribosomal protein uL1 family. In terms of assembly, part of the 50S ribosomal subunit.

Functionally, binds directly to 23S rRNA. The L1 stalk is quite mobile in the ribosome, and is involved in E site tRNA release. Its function is as follows. Protein L1 is also a translational repressor protein, it controls the translation of the L11 operon by binding to its mRNA. The polypeptide is Large ribosomal subunit protein uL1 (Clostridium botulinum (strain ATCC 19397 / Type A)).